The chain runs to 296 residues: D-alanine--D-alanine ligase (296 aa).

Residues 103–293 enclose the ATP-grasp domain; it reads KEILMHHRMP…FDSFVKRIIE (191 aa). 129–180 contributes to the ATP binding site; that stretch reads ISFPAAVKPSSGGSSIATFKVKSIQELKHAYEEASKYGEVMIEQWVTGKEIT. Mg(2+) is bound by residues D247, E260, and N262.

It belongs to the D-alanine--D-alanine ligase family. Requires Mg(2+) as cofactor. Mn(2+) is required as a cofactor.

The protein resides in the cytoplasm. The enzyme catalyses 2 D-alanine + ATP = D-alanyl-D-alanine + ADP + phosphate + H(+). The protein operates within cell wall biogenesis; peptidoglycan biosynthesis. In terms of biological role, cell wall formation. In Francisella tularensis subsp. holarctica (strain LVS), this protein is D-alanine--D-alanine ligase.